The chain runs to 663 residues: UvrABC system protein B (663 aa).

A Helicase ATP-binding domain is found at 27–414; sequence KNIENGVKDQ…SDNHIAEQLI (388 aa). 40 to 47 serves as a coordination point for ATP; sequence GVTGSGKT. Positions 93–116 match the Beta-hairpin motif; the sequence is YYDYYQPEAYIKTTDTYIEKDSSV. One can recognise a Helicase C-terminal domain in the interval 432–594; it reads QVDDLLDEIR…IDPKSIIKEI (163 aa). The UVR domain maps to 624 to 659; the sequence is EKEITKLEKKIKKLVEELDFEQAIILRDEMLKLKEL.

This sequence belongs to the UvrB family. As to quaternary structure, forms a heterotetramer with UvrA during the search for lesions. Interacts with UvrC in an incision complex.

It is found in the cytoplasm. In terms of biological role, the UvrABC repair system catalyzes the recognition and processing of DNA lesions. A damage recognition complex composed of 2 UvrA and 2 UvrB subunits scans DNA for abnormalities. Upon binding of the UvrA(2)B(2) complex to a putative damaged site, the DNA wraps around one UvrB monomer. DNA wrap is dependent on ATP binding by UvrB and probably causes local melting of the DNA helix, facilitating insertion of UvrB beta-hairpin between the DNA strands. Then UvrB probes one DNA strand for the presence of a lesion. If a lesion is found the UvrA subunits dissociate and the UvrB-DNA preincision complex is formed. This complex is subsequently bound by UvrC and the second UvrB is released. If no lesion is found, the DNA wraps around the other UvrB subunit that will check the other stand for damage. This Fusobacterium nucleatum subsp. nucleatum (strain ATCC 25586 / DSM 15643 / BCRC 10681 / CIP 101130 / JCM 8532 / KCTC 2640 / LMG 13131 / VPI 4355) protein is UvrABC system protein B.